The sequence spans 408 residues: MNDTVKKPTGGRGDDPLPAGAALSAVAPHEPVSVVLAGGGTAGHVEPAMAVADALKALDPHVRITALGTARGLETRLVPERGYDLELITPVPLPRKPTGDLARLPSRVWRAVRETRAVLHAVDADVVIGFGGYVALPAYLAARGVSPRKPRVPVVIHEANASAGLANRVGARTAQRVLSAVPDCGLPGAEVVGVPVREAITSLDRAALRAEARRHFGFADDARVLLVFGGSQGAASLNRAVSGAAAQLAAAGVSVLHAHGPKNTLDLREPQPGDPPYVAVPYLDRMDLAYAAADLVICRSGAMTVAEVSAVGLPAIYVPLPIGNGEQRLNALPVVDAGGGMVVADADLTPELVAREVAGLVGDPPRLAAMTTAAARVGHPDAARRVAQAALDIGRTARLARGATGGRP.

The segment at 1 to 20 (MNDTVKKPTGGRGDDPLPAG) is disordered. Residues 41–43 (TAG), Asn-160, Arg-197, Ser-231, and Gln-327 contribute to the UDP-N-acetyl-alpha-D-glucosamine site.

It belongs to the glycosyltransferase 28 family. MurG subfamily.

It localises to the cell membrane. The catalysed reaction is di-trans,octa-cis-undecaprenyl diphospho-N-acetyl-alpha-D-muramoyl-L-alanyl-D-glutamyl-meso-2,6-diaminopimeloyl-D-alanyl-D-alanine + UDP-N-acetyl-alpha-D-glucosamine = di-trans,octa-cis-undecaprenyl diphospho-[N-acetyl-alpha-D-glucosaminyl-(1-&gt;4)]-N-acetyl-alpha-D-muramoyl-L-alanyl-D-glutamyl-meso-2,6-diaminopimeloyl-D-alanyl-D-alanine + UDP + H(+). It participates in cell wall biogenesis; peptidoglycan biosynthesis. Its function is as follows. Cell wall formation. Catalyzes the transfer of a GlcNAc subunit on undecaprenyl-pyrophosphoryl-MurNAc-pentapeptide (lipid intermediate I) to form undecaprenyl-pyrophosphoryl-MurNAc-(pentapeptide)GlcNAc (lipid intermediate II). The chain is UDP-N-acetylglucosamine--N-acetylmuramyl-(pentapeptide) pyrophosphoryl-undecaprenol N-acetylglucosamine transferase from Mycolicibacterium paratuberculosis (strain ATCC BAA-968 / K-10) (Mycobacterium paratuberculosis).